The following is a 562-amino-acid chain: uncharacterized protein (562 aa).

5 helical membrane passes run 10–27, 34–53, 63–85, 92–114, and 155–177; these read IYPEIAVFLSLAIGYWVG, FSLGAVTATLLAAVVIGQFD, IFFLMFLFAVGYGIGPQFVQGIA, ALFAVVACLFSLLFPILCAKIAG, and FSVIPVAYAVTYIFGTVGSAIVL. RCK C-terminal domains are found at residues 204–288 and 290–377; these read TENA…HPDS and DETQ…QLGV. The next 6 helical transmembrane spans lie at 387 to 404, 408 to 430, 443 to 465, 475 to 497, 504 to 526, and 539 to 561; these read VAFWAFAIVIGALLGSLV, GNLPLTLSTAGGVLIAGLIFSWV, PTVWFMNSVGLNVFIAAIGISAG, LGFSLFLWGVVATTLPLFFAALV, FHPAILLGCCAGARTTTASLGMI, and YTITYAVGNTLLTMWGLVLILIL.

It belongs to the AAE transporter (TC 2.A.81) family.

It localises to the cell membrane. This is an uncharacterized protein from Shewanella oneidensis (strain ATCC 700550 / JCM 31522 / CIP 106686 / LMG 19005 / NCIMB 14063 / MR-1).